A 418-amino-acid chain; its full sequence is Serine hydroxymethyltransferase (418 aa).

(6S)-5,6,7,8-tetrahydrofolate is bound by residues leucine 121 and glycine 125–leucine 127. The residue at position 230 (lysine 230) is an N6-(pyridoxal phosphate)lysine. Serine 355–phenylalanine 357 is a (6S)-5,6,7,8-tetrahydrofolate binding site.

This sequence belongs to the SHMT family. Homodimer. Pyridoxal 5'-phosphate serves as cofactor.

It localises to the cytoplasm. The catalysed reaction is (6R)-5,10-methylene-5,6,7,8-tetrahydrofolate + glycine + H2O = (6S)-5,6,7,8-tetrahydrofolate + L-serine. Its pathway is one-carbon metabolism; tetrahydrofolate interconversion. It functions in the pathway amino-acid biosynthesis; glycine biosynthesis; glycine from L-serine: step 1/1. Its function is as follows. Catalyzes the reversible interconversion of serine and glycine with tetrahydrofolate (THF) serving as the one-carbon carrier. This reaction serves as the major source of one-carbon groups required for the biosynthesis of purines, thymidylate, methionine, and other important biomolecules. Also exhibits THF-independent aldolase activity toward beta-hydroxyamino acids, producing glycine and aldehydes, via a retro-aldol mechanism. The sequence is that of Serine hydroxymethyltransferase from Streptococcus pyogenes serotype M5 (strain Manfredo).